The chain runs to 951 residues: Cation channel sperm-associated auxiliary subunit epsilon (951 aa).

A signal peptide spans 1–19 (MSAREVAVLLLWLSCYGSA). Over 20 to 903 (LWRYSTNSPN…ETFGLIPSPS (884 aa)) the chain is Extracellular. 4 disulfide bridges follow: C57–C71, C101–C206, C246–C336, and C410–C413. N61 and N114 each carry an N-linked (GlcNAc...) asparagine glycan. N-linked (GlcNAc...) asparagine glycosylation is found at N414, N472, N487, N493, and N535. Cystine bridges form between C583/C690, C703/C885, C719/C752, and C804/C835. N796 carries an N-linked (GlcNAc...) asparagine glycan. N854, N881, and N886 each carry an N-linked (GlcNAc...) asparagine glycan. Residues 904–924 (VYLVASFLFVLMLLFFTILVL) form a helical membrane-spanning segment. The Cytoplasmic segment spans residues 925-951 (SYFRYMRIYRRYIYEPLHKPQRKRKKN).

The protein belongs to the CATSPERD family. As to quaternary structure, component of the CatSper complex or CatSpermasome composed of the core pore-forming members CATSPER1, CATSPER2, CATSPER3 and CATSPER4 as well as auxiliary members CATSPERB, CATSPERG, CATSPERD, CATSPERE, CATSPERZ, C2CD6/CATSPERT, TMEM249, TMEM262 and EFCAB9. HSPA1 may be an additional auxiliary complex member. The core complex members CATSPER1, CATSPER2, CATSPER3 and CATSPER4 form a heterotetrameric channel. The auxiliary CATSPERB, CATSPERG, CATSPERD and CATSPERE subunits form a pavilion-like structure over the pore which stabilizes the complex through interactions with CATSPER4, CATSPER3, CATSPER1 and CATSPER2 respectively. TMEM262/CATSPERH interacts with CATSPERB, further stabilizing the complex. C2CD6/CATSPERT interacts at least with CATSPERD and is required for targeting the CatSper complex in the flagellar membrane.

The protein localises to the cell projection. It localises to the cilium. Its subcellular location is the flagellum membrane. Functionally, auxiliary component of the CatSper complex, a complex involved in sperm cell hyperactivation. Sperm cell hyperactivation is needed for sperm motility which is essential late in the preparation of sperm for fertilization. In Homo sapiens (Human), this protein is Cation channel sperm-associated auxiliary subunit epsilon.